The sequence spans 842 residues: Probable vinculin (842 aa).

Positions 585 to 679 (KEARKRLDDV…AAEEEERKRA (95 aa)) form a coiled coil.

It belongs to the vinculin/alpha-catenin family. Monomer. Associates with F-actin. Interacts with aarA, ctxA, ctxB and rgaA. In terms of tissue distribution, epithelium.

The protein localises to the cytoplasm. Its subcellular location is the cell cortex. The protein resides in the cell junction. Its function is as follows. Involved in cell adhesion. Thought to play an important role in cytokinesis B, probably by providing substrate adhesion and traction forces. Required to organize and polarize the tip epithelium during cytokinesis. Required for the normal distribution of myosin in the tip epithelium. Involved in the localization of ctxA, ctxB, dcsA, exoc6 and rgaA. Thought to form a complex with ctxA, ctxB, and rgaA which regulates myosin accumulation to the apical plasma membrane. The sequence is that of Probable vinculin (ctnnA) from Dictyostelium discoideum (Social amoeba).